The chain runs to 247 residues: Fasciclin-like arabinogalactan protein 6 (247 aa).

The N-terminal stretch at 1–23 is a signal peptide; it reads MSSSLFSYVVLLIFLFTIPYIQS. In terms of domain architecture, FAS1 spans 36-182; it reads PINLTAILEA…LAVYVVDSVL (147 aa). 5 N-linked (GlcNAc...) asparagine glycosylation sites follow: N38, N57, N70, N142, and N153. Residues 192–212 show a composition bias toward low complexity; the sequence is TTPTGAPAPKSSTSSSDADSP. Residues 192-221 are disordered; sequence TTPTGAPAPKSSTSSSDADSPAADDEHKSA. Residue G222 is the site of GPI-anchor amidated glycine attachment. Residues 223-247 constitute a propeptide, removed in mature form; it reads SSVKRTSLGIVVSFALFCCSVIYIA.

The protein belongs to the fasciclin-like AGP family.

The protein resides in the cell membrane. May be a cell surface adhesion protein. In Arabidopsis thaliana (Mouse-ear cress), this protein is Fasciclin-like arabinogalactan protein 6 (FLA6).